Consider the following 90-residue polypeptide: UPF0237 protein BL1209.1 (90 aa).

One can recognise an ACT domain in the interval 5–79 (IITVVGQDTV…DDIGVRIRCQ (75 aa)).

The protein belongs to the UPF0237 family.

This Bifidobacterium longum (strain NCC 2705) protein is UPF0237 protein BL1209.1.